A 147-amino-acid polypeptide reads, in one-letter code: Probable WRKY transcription factor 45 (147 aa).

The interval 21-52 is disordered; the sequence is TEFHGVDNSAQPTTSSEEKPRSKKKKKEREAR. Residues 59-124 constitute a DNA-binding region (WRKY); that stretch reads SQVDILDDGY…YQGVHTHAVD (66 aa). 4 residues coordinate Zn(2+): cysteine 90, cysteine 95, histidine 119, and histidine 121.

The protein belongs to the WRKY group I family.

It localises to the nucleus. In terms of biological role, transcription factor. Interacts specifically with the W box (5'-(T)TGAC[CT]-3'), a frequently occurring elicitor-responsive cis-acting element. This chain is Probable WRKY transcription factor 45 (WRKY45), found in Arabidopsis thaliana (Mouse-ear cress).